The sequence spans 492 residues: Ketol-acid reductoisomerase (NADP(+)) (492 aa).

The 194-residue stretch at 15-208 (AQLGKCRFMA…GGHRAGVLES (194 aa)) folds into the KARI N-terminal Rossmann domain. NADP(+)-binding positions include 45 to 48 (CGAQ), arginine 68, arginine 76, serine 78, and 108 to 110 (DKQ). Histidine 132 is a catalytic residue. Residue glycine 158 participates in NADP(+) binding. KARI C-terminal knotted domains lie at 209 to 344 (SFVA…NAPQ) and 345 to 485 (FEGK…MTDM). Aspartate 217, glutamate 221, glutamate 389, and glutamate 393 together coordinate Mg(2+). Substrate is bound at residue serine 414.

It belongs to the ketol-acid reductoisomerase family. Mg(2+) serves as cofactor.

The enzyme catalyses (2R)-2,3-dihydroxy-3-methylbutanoate + NADP(+) = (2S)-2-acetolactate + NADPH + H(+). It carries out the reaction (2R,3R)-2,3-dihydroxy-3-methylpentanoate + NADP(+) = (S)-2-ethyl-2-hydroxy-3-oxobutanoate + NADPH + H(+). Its pathway is amino-acid biosynthesis; L-isoleucine biosynthesis; L-isoleucine from 2-oxobutanoate: step 2/4. It functions in the pathway amino-acid biosynthesis; L-valine biosynthesis; L-valine from pyruvate: step 2/4. Involved in the biosynthesis of branched-chain amino acids (BCAA). Catalyzes an alkyl-migration followed by a ketol-acid reduction of (S)-2-acetolactate (S2AL) to yield (R)-2,3-dihydroxy-isovalerate. In the isomerase reaction, S2AL is rearranged via a Mg-dependent methyl migration to produce 3-hydroxy-3-methyl-2-ketobutyrate (HMKB). In the reductase reaction, this 2-ketoacid undergoes a metal-dependent reduction by NADPH to yield (R)-2,3-dihydroxy-isovalerate. The sequence is that of Ketol-acid reductoisomerase (NADP(+)) from Yersinia pseudotuberculosis serotype O:3 (strain YPIII).